The primary structure comprises 416 residues: 5-methylthioadenosine/S-adenosylhomocysteine deaminase 2 (416 aa).

2 residues coordinate Zn(2+): His58 and His60. Glu86 and His178 together coordinate substrate. His205 lines the Zn(2+) pocket. Glu208 and Asp293 together coordinate substrate. Asp293 is a binding site for Zn(2+).

Belongs to the metallo-dependent hydrolases superfamily. MTA/SAH deaminase family. The cofactor is Zn(2+).

It catalyses the reaction S-adenosyl-L-homocysteine + H2O + H(+) = S-inosyl-L-homocysteine + NH4(+). The catalysed reaction is S-methyl-5'-thioadenosine + H2O + H(+) = S-methyl-5'-thioinosine + NH4(+). Its function is as follows. Catalyzes the deamination of 5-methylthioadenosine and S-adenosyl-L-homocysteine into 5-methylthioinosine and S-inosyl-L-homocysteine, respectively. Is also able to deaminate adenosine. In Archaeoglobus fulgidus (strain ATCC 49558 / DSM 4304 / JCM 9628 / NBRC 100126 / VC-16), this protein is 5-methylthioadenosine/S-adenosylhomocysteine deaminase 2.